Reading from the N-terminus, the 381-residue chain is MAAFGRQVLDWHRLIPLTWACMARQTPHLGEQRRTTASLLRKLTTASNGGVIEELSCVRSNNYVQEPECRRNLVQCLLEKQGTPVVQGSLELERVMSSLLDMGFSNAHINELLSVRRGASLQQLLDIISEFILLGLNPEPVCVVLKKSPQLLKLPIMQMRKRSSYLQKLGLGEGKLKRVLYCCPEIFTMRQQDINDTVRLLKEKCLFTVQQVTKILHSCPSVLREDLGQLEYKFQYAYFRMGIKHPDIVKSEYLQYSLTKIKQRHIYLERLGRYQTPDKKGQTQIPNPLLKDILRVSEAEFLARTACTSVEEFQVFKKLLAREEEESESSTSDDKRASLDEDEDDDDEEDNDEDDNDEDDDDEDDDEAEDNDEDEDDDEEE.

Residues 1-42 (MAAFGRQVLDWHRLIPLTWACMARQTPHLGEQRRTTASLLRK) constitute a mitochondrion transit peptide. MTERF repeat units lie at residues 142 to 172 (CVVLKKSPQLLKLPIMQMRKRSSYLQKLGLG), 177 to 204 (KRVLYCCPEIFTMRQQDINDTVRLLKEK), 209 to 239 (VQQVTKILHSCPSVLREDLGQLEYKFQYAYF), 245 to 270 (HPDIVKSEYLQYSLTKIKQRHIYLER), and 290 to 318 (LKDILRVSEAEFLARTACTSVEEFQVFKK). The interval 310–327 (VEEFQVFKKLLAREEEES) is dimerization with NSUN4. The interval 322–381 (REEEESESSTSDDKRASLDEDEDDDDEEDNDEDDNDEDDDDEDDDEAEDNDEDEDDDEEE) is disordered. The span at 340–381 (DEDEDDDDEEDNDEDDNDEDDDDEDDDEAEDNDEDEDDDEEE) shows a compositional bias: acidic residues.

Belongs to the mTERF family. Heterodimer with NSUN4; this interaction may be required for NSUN4 recruitment to the mitochondrial large ribosomal subunit. Post-translationally, the mature mitochondrial protein exists in 2 forms differing at the level of their N-terminus, one is starting at residue 43 and the other at residue 48.

The protein resides in the mitochondrion. Regulator of mitochondrial ribosome biogenesis and translation. Binds to mitochondrial ribosomal RNAs 16S, 12S and 7S and targets NSUN4 RNA methyltransferase to the mitochondrial large ribosomal subunit (39S). In Homo sapiens (Human), this protein is Transcription termination factor 4, mitochondrial (MTERF4).